The primary structure comprises 178 residues: Large ribosomal subunit protein uL30 (178 aa).

It belongs to the universal ribosomal protein uL30 family. In terms of assembly, part of the 50S ribosomal subunit.

The sequence is that of Large ribosomal subunit protein uL30 from Pyrobaculum aerophilum (strain ATCC 51768 / DSM 7523 / JCM 9630 / CIP 104966 / NBRC 100827 / IM2).